A 637-amino-acid chain; its full sequence is 3D-(3,5/4)-trihydroxycyclohexane-1,2-dione hydrolase (637 aa).

E65 serves as a coordination point for thiamine diphosphate. The segment at 441-521 (SLPGDLQRLW…INVLLFDNSG (81 aa)) is thiamine pyrophosphate binding. Residues D492 and N519 each contribute to the Mg(2+) site.

Belongs to the TPP enzyme family. Mg(2+) serves as cofactor. Requires thiamine diphosphate as cofactor.

It catalyses the reaction 3D-3,5/4-trihydroxycyclohexane-1,2-dione + H2O = 5-deoxy-D-glucuronate + H(+). It functions in the pathway polyol metabolism; myo-inositol degradation into acetyl-CoA; acetyl-CoA from myo-inositol: step 3/7. Its function is as follows. Involved in the cleavage of the C1-C2 bond of 3D-(3,5/4)-trihydroxycyclohexane-1,2-dione (THcHDO) to yield 5-deoxy-glucuronate (5DG). This Halalkalibacterium halodurans (strain ATCC BAA-125 / DSM 18197 / FERM 7344 / JCM 9153 / C-125) (Bacillus halodurans) protein is 3D-(3,5/4)-trihydroxycyclohexane-1,2-dione hydrolase.